The primary structure comprises 272 residues: 4-hydroxy-tetrahydrodipicolinate reductase (272 aa).

NAD(+) contacts are provided by residues 11 to 16 (GAGGRM) and glutamate 37. Arginine 38 contributes to the NADP(+) binding site. Residues 101–103 (GTT) and 125–128 (AANF) each bind NAD(+). Histidine 158 (proton donor/acceptor) is an active-site residue. Histidine 159 is a binding site for (S)-2,3,4,5-tetrahydrodipicolinate. The active-site Proton donor is lysine 162. 168-169 (GT) is a binding site for (S)-2,3,4,5-tetrahydrodipicolinate.

This sequence belongs to the DapB family. As to quaternary structure, homotetramer.

It is found in the cytoplasm. The enzyme catalyses (S)-2,3,4,5-tetrahydrodipicolinate + NAD(+) + H2O = (2S,4S)-4-hydroxy-2,3,4,5-tetrahydrodipicolinate + NADH + H(+). The catalysed reaction is (S)-2,3,4,5-tetrahydrodipicolinate + NADP(+) + H2O = (2S,4S)-4-hydroxy-2,3,4,5-tetrahydrodipicolinate + NADPH + H(+). It functions in the pathway amino-acid biosynthesis; L-lysine biosynthesis via DAP pathway; (S)-tetrahydrodipicolinate from L-aspartate: step 4/4. Catalyzes the conversion of 4-hydroxy-tetrahydrodipicolinate (HTPA) to tetrahydrodipicolinate. In Edwardsiella ictaluri (strain 93-146), this protein is 4-hydroxy-tetrahydrodipicolinate reductase.